The following is an 87-amino-acid chain: Phytosulfokines 2 (87 aa).

The signal sequence occupies residues 1 to 22 (MANVSALLTIALLLCSTLMCTA). Residues 23-77 (RPEPAISISITTAADPCNMEKKIEGKLDDMHMVDENCGADDEDCLMRRTLVAHTD) constitute a propeptide that is removed on maturation. Tyr78 and Tyr80 each carry sulfotyrosine. The propeptide occupies 83–87 (KKKHP).

This sequence belongs to the phytosulfokine family. In terms of processing, sulfation is important for activity and for the binding to a putative membrane receptor. PSK-beta is an enzymatic derivative of PSK-alpha. Expressed in stems, roots and leaves.

The protein resides in the secreted. Functionally, promotes plant cell differentiation, organogenesis and somatic embryogenesis as well as cell proliferation. The chain is Phytosulfokines 2 (PSK2) from Arabidopsis thaliana (Mouse-ear cress).